A 285-amino-acid chain; its full sequence is MGAPPPAPRSRLCGAWGPFPRVFAAGAVAADSPGFVEDREQRSGVSDPGSLESGWDRLRQLFAKDEQQRFSKEIDYIYRAAVSAGIIGWAYGGIPAFIYAKKRYIEQSQAEIYHNRFDAVQSAHRAATRGFIRYGWRWSWRTAVFVTIFNTVNTGLTVYRNKDAMSHFAIAGAVTGGLFRINLGVRGLVAGSIIGALLGAPMGSLLMALEKYSGETVQERRQKEWKALHEQRLEEWRSSLQVTELLPMEIESGLEKIQPEGDAQRIEELLSLPRNPSSPHQQSKH.

4 helical membrane-spanning segments follow: residues 80–100 (AAVS…FIYA), 137–159 (RWSW…LTVY), 165–185 (MSHF…NLGV), and 188–208 (LVAG…LLMA). The disordered stretch occupies residues 265–285 (RIEELLSLPRNPSSPHQQSKH). The span at 274–285 (RNPSSPHQQSKH) shows a compositional bias: polar residues. Ser-277 bears the Phosphoserine mark.

Belongs to the Tim17/Tim22/Tim23 family. As to quaternary structure, associates with the intermediate 315 kDa subcomplex of incompletely assembled complex I. Interacts with TMEM70.

It is found in the mitochondrion membrane. Chaperone protein involved in the assembly of the mitochondrial NADH:ubiquinone oxidoreductase complex (complex I). Participates in constructing the membrane arm of complex I. This Mus musculus (Mouse) protein is Complex I assembly factor TIMMDC1, mitochondrial.